The chain runs to 353 residues: Thiamine-phosphate synthase (353 aa).

Positions 1–128 are unknown; it reads MESMPVAPST…ARTAAAVRYA (128 aa). Residues 129–353 are thiamine-phosphate synthase; sequence LYDHEVRILE…ASRQLLDLLT (225 aa). Residues 185 to 189 and asparagine 217 contribute to the 4-amino-2-methyl-5-(diphosphooxymethyl)pyrimidine site; that span reads QYRRK. Mg(2+) is bound by residues aspartate 218 and aspartate 237. Serine 256 contributes to the 4-amino-2-methyl-5-(diphosphooxymethyl)pyrimidine binding site. 282-284 provides a ligand contact to 2-[(2R,5Z)-2-carboxy-4-methylthiazol-5(2H)-ylidene]ethyl phosphate; sequence TAT. Position 285 (lysine 285) interacts with 4-amino-2-methyl-5-(diphosphooxymethyl)pyrimidine. Residues glycine 312 and 332–333 contribute to the 2-[(2R,5Z)-2-carboxy-4-methylthiazol-5(2H)-ylidene]ethyl phosphate site; that span reads VS.

This sequence belongs to the thiamine-phosphate synthase family. Mg(2+) serves as cofactor.

The catalysed reaction is 2-[(2R,5Z)-2-carboxy-4-methylthiazol-5(2H)-ylidene]ethyl phosphate + 4-amino-2-methyl-5-(diphosphooxymethyl)pyrimidine + 2 H(+) = thiamine phosphate + CO2 + diphosphate. It catalyses the reaction 2-(2-carboxy-4-methylthiazol-5-yl)ethyl phosphate + 4-amino-2-methyl-5-(diphosphooxymethyl)pyrimidine + 2 H(+) = thiamine phosphate + CO2 + diphosphate. The enzyme catalyses 4-methyl-5-(2-phosphooxyethyl)-thiazole + 4-amino-2-methyl-5-(diphosphooxymethyl)pyrimidine + H(+) = thiamine phosphate + diphosphate. Its pathway is cofactor biosynthesis; thiamine diphosphate biosynthesis; thiamine phosphate from 4-amino-2-methyl-5-diphosphomethylpyrimidine and 4-methyl-5-(2-phosphoethyl)-thiazole: step 1/1. In terms of biological role, condenses 4-methyl-5-(beta-hydroxyethyl)thiazole monophosphate (THZ-P) and 2-methyl-4-amino-5-hydroxymethyl pyrimidine pyrophosphate (HMP-PP) to form thiamine monophosphate (TMP). This Synechococcus sp. (strain WH7803) protein is Thiamine-phosphate synthase.